Consider the following 276-residue polypeptide: NH(3)-dependent NAD(+) synthetase (276 aa).

43-50 (GISGGVDS) is a binding site for ATP. Residue aspartate 49 coordinates Mg(2+). Arginine 146 contributes to the deamido-NAD(+) binding site. Threonine 166 serves as a coordination point for ATP. Glutamate 171 provides a ligand contact to Mg(2+). Residues lysine 179 and aspartate 186 each contribute to the deamido-NAD(+) site. Residues lysine 195 and threonine 217 each contribute to the ATP site. Deamido-NAD(+) is bound at residue 266–267 (HK).

It belongs to the NAD synthetase family. As to quaternary structure, homodimer.

The enzyme catalyses deamido-NAD(+) + NH4(+) + ATP = AMP + diphosphate + NAD(+) + H(+). It participates in cofactor biosynthesis; NAD(+) biosynthesis; NAD(+) from deamido-NAD(+) (ammonia route): step 1/1. Catalyzes the ATP-dependent amidation of deamido-NAD to form NAD. Uses ammonia as a nitrogen source. The polypeptide is NH(3)-dependent NAD(+) synthetase (Shewanella oneidensis (strain ATCC 700550 / JCM 31522 / CIP 106686 / LMG 19005 / NCIMB 14063 / MR-1)).